The sequence spans 760 residues: BMP/retinoic acid-inducible neural-specific protein 1 (760 aa).

An N-terminal signal peptide occupies residues 1-16 (MNWRFVELLYFLFVWG). Residues 68–251 (RYKIYREFAR…FVQSALSYIM (184 aa)) form the MACPF domain. N-linked (GlcNAc...) asparagine glycans are attached at residues N156, N433, N443, N553, N599, N630, and N676.

Belongs to the BRINP family. As to expression, expressed in brain. Expressed in GABAergic neurons of the pre-frontal cortex. Weakly expressed in embryonic stem (ES) cells and in ES-derived neural stem cells (NSCs).

It is found in the cytoplasm. Its function is as follows. Plays a role in neurogenesis, brain development, and the functioning of GABAergic neurons. May suppress cell cycle progression in postmitotic neurons by inhibiting G1/S transition. The chain is BMP/retinoic acid-inducible neural-specific protein 1 (Brinp1) from Mus musculus (Mouse).